A 390-amino-acid polypeptide reads, in one-letter code: Transforming growth factor beta-1 proprotein (390 aa).

A signal peptide spans Met1–Gly29. Residues Leu30–Pro74 are straightjacket domain. Residues Glu75–Leu271 form an arm domain region. Asn82, Asn136, and Asn176 each carry an N-linked (GlcNAc...) asparagine glycan. The bowtie tail stretch occupies residues Asp226–Gly252. The Cell attachment site signature appears at Arg244–Asp246. 4 disulfides stabilise this stretch: Cys285–Cys294, Cys293–Cys356, Cys322–Cys387, and Cys326–Cys389.

It belongs to the TGF-beta family. As to quaternary structure, homodimer; disulfide-linked. Interacts with the serine proteases, HTRA1 and HTRA3: the interaction with either inhibits TGFB1-mediated signaling and the HTRA protease activity is required for this inhibition. May interact with THSD4; this interaction may lead to sequestration by FBN1 microfibril assembly and attenuation of TGFB signaling. Interacts with CD109, DPT and ASPN. Interacts with EFEMP2. Interacts with TSKU; the interaction contributes to regulation of the hair cycle. Interacts with TGFBR3. In terms of assembly, homodimer; disulfide-linked. Interacts with transforming growth factor beta-1 (TGF-beta-1) chain; interaction is non-covalent and maintains TGF-beta-1 in a latent state; each latency-associated peptide (LAP) monomer interacts with TGF-beta-1 in the other monomer. Interacts with LTBP1; leading to regulation of TGF-beta-1 activation. Interacts with LRRC32/GARP; leading to regulation of TGF-beta-1 activation on the surface of activated regulatory T-cells (Tregs). Interacts with LRRC33/NRROS; leading to regulation of TGF-beta-1 activation in macrophages and microglia. Interacts (via cell attachment site) with integrins ITGAV and ITGB6 (ITGAV:ITGB6), leading to release of the active TGF-beta-1. Interacts with NREP; the interaction results in a decrease in TGFB1 autoinduction. Interacts with HSP90AB1; inhibits latent TGFB1 activation. Homodimer; disulfide-linked. Interacts with TGF-beta receptors (TGFBR1 and TGFBR2), leading to signal transduction. In terms of processing, transforming growth factor beta-1 proprotein: The precursor proprotein is cleaved in the Golgi apparatus by FURIN to form Transforming growth factor beta-1 (TGF-beta-1) and Latency-associated peptide (LAP) chains, which remain non-covalently linked, rendering TGF-beta-1 inactive. Post-translationally, N-glycosylated. Deglycosylation leads to activation of Transforming growth factor beta-1 (TGF-beta-1); mechanisms triggering deglycosylation-driven activation of TGF-beta-1 are however unclear.

The protein localises to the secreted. It is found in the extracellular space. Its subcellular location is the extracellular matrix. Its function is as follows. Transforming growth factor beta-1 proprotein: Precursor of the Latency-associated peptide (LAP) and Transforming growth factor beta-1 (TGF-beta-1) chains, which constitute the regulatory and active subunit of TGF-beta-1, respectively. Functionally, required to maintain the Transforming growth factor beta-1 (TGF-beta-1) chain in a latent state during storage in extracellular matrix. Associates non-covalently with TGF-beta-1 and regulates its activation via interaction with 'milieu molecules', such as LTBP1, LRRC32/GARP and LRRC33/NRROS, that control activation of TGF-beta-1. Interaction with LRRC33/NRROS regulates activation of TGF-beta-1 in macrophages and microglia. Interaction with LRRC32/GARP controls activation of TGF-beta-1 on the surface of activated regulatory T-cells (Tregs). Interaction with integrins (ITGAV:ITGB6 or ITGAV:ITGB8) results in distortion of the Latency-associated peptide chain and subsequent release of the active TGF-beta-1. In terms of biological role, multifunctional protein that regulates the growth and differentiation of various cell types and is involved in various processes, such as normal development, immune function, microglia function and responses to neurodegeneration. Activation into mature form follows different steps: following cleavage of the proprotein in the Golgi apparatus, Latency-associated peptide (LAP) and Transforming growth factor beta-1 (TGF-beta-1) chains remain non-covalently linked rendering TGF-beta-1 inactive during storage in extracellular matrix. At the same time, LAP chain interacts with 'milieu molecules', such as LTBP1, LRRC32/GARP and LRRC33/NRROS that control activation of TGF-beta-1 and maintain it in a latent state during storage in extracellular milieus. TGF-beta-1 is released from LAP by integrins (ITGAV:ITGB6 or ITGAV:ITGB8): integrin-binding to LAP stabilizes an alternative conformation of the LAP bowtie tail and results in distortion of the LAP chain and subsequent release of the active TGF-beta-1. Once activated following release of LAP, TGF-beta-1 acts by binding to TGF-beta receptors (TGFBR1 and TGFBR2), which transduce signal. While expressed by many cells types, TGF-beta-1 only has a very localized range of action within cell environment thanks to fine regulation of its activation by Latency-associated peptide chain (LAP) and 'milieu molecules'. Plays an important role in bone remodeling: acts as a potent stimulator of osteoblastic bone formation, causing chemotaxis, proliferation and differentiation in committed osteoblasts. Can promote either T-helper 17 cells (Th17) or regulatory T-cells (Treg) lineage differentiation in a concentration-dependent manner. At high concentrations, leads to FOXP3-mediated suppression of RORC and down-regulation of IL-17 expression, favoring Treg cell development. At low concentrations in concert with IL-6 and IL-21, leads to expression of the IL-17 and IL-23 receptors, favoring differentiation to Th17 cells. Stimulates sustained production of collagen through the activation of CREB3L1 by regulated intramembrane proteolysis (RIP). Mediates SMAD2/3 activation by inducing its phosphorylation and subsequent translocation to the nucleus. Positively regulates odontoblastic differentiation in dental papilla cells, via promotion of IPO7-mediated translocation of phosphorylated SMAD2 to the nucleus and subsequent transcription of target genes. Can induce epithelial-to-mesenchymal transition (EMT) and cell migration in various cell types. This is Transforming growth factor beta-1 proprotein (TGFB1) from Ovis aries (Sheep).